The following is a 620-amino-acid chain: Glutathione-regulated potassium-efflux system protein KefC (620 aa).

12 helical membrane-spanning segments follow: residues His-4–Val-24, Leu-26–Leu-46, Ser-54–Leu-74, Gly-90–Leu-110, Val-114–Met-134, Phe-149–Leu-169, Met-178–Leu-198, Val-218–Gly-238, Gly-270–Leu-290, Leu-294–Ile-314, Trp-327–Gln-347, and Ser-359–Asn-379. The region spanning Gln-399–Thr-518 is the RCK N-terminal domain. Residues Gly-597–Ser-620 form a disordered region.

Belongs to the monovalent cation:proton antiporter 2 (CPA2) transporter (TC 2.A.37) family. KefC subfamily. As to quaternary structure, homodimer. Interacts with the regulatory subunit KefF.

It localises to the cell inner membrane. Functionally, pore-forming subunit of a potassium efflux system that confers protection against electrophiles. Catalyzes K(+)/H(+) antiport. This is Glutathione-regulated potassium-efflux system protein KefC from Escherichia coli O8 (strain IAI1).